A 336-amino-acid polypeptide reads, in one-letter code: Apyrase (336 aa).

The N-terminal stretch at 1 to 21 (MFLKFCVVAFAICLSINLSEG) is a signal peptide. N-linked (GlcNAc...) asparagine glycosylation is present at asparagine 209.

The protein belongs to the apyrase family. The cofactor is Ca(2+). As to expression, salivary gland (at protein level).

It is found in the secreted. It carries out the reaction a ribonucleoside 5'-triphosphate + 2 H2O = a ribonucleoside 5'-phosphate + 2 phosphate + 2 H(+). Its function is as follows. Facilitates hematophagy by inhibiting ADP- and collagen-dependent platelet aggregation in the host. Cleaves adenosine triphosphate (ATP) and adenosine diphosphate (ADP) to adenosine monophosphate (AMP) and inorganic phosphate in calcium-dependent manner. The chain is Apyrase from Phlebotomus duboscqi (Sandfly).